A 227-amino-acid polypeptide reads, in one-letter code: Ribose-5-phosphate isomerase A (227 aa).

Residues 26–29 (TGST), 82–85 (DGAD), and 95–98 (KGGG) contribute to the substrate site. The active-site Proton acceptor is the E104. Position 122 (K122) interacts with substrate.

It belongs to the ribose 5-phosphate isomerase family. In terms of assembly, homodimer.

The catalysed reaction is aldehydo-D-ribose 5-phosphate = D-ribulose 5-phosphate. It participates in carbohydrate degradation; pentose phosphate pathway; D-ribose 5-phosphate from D-ribulose 5-phosphate (non-oxidative stage): step 1/1. In terms of biological role, catalyzes the reversible conversion of ribose-5-phosphate to ribulose 5-phosphate. The sequence is that of Ribose-5-phosphate isomerase A from Streptococcus pneumoniae serotype 2 (strain D39 / NCTC 7466).